The sequence spans 403 residues: MEFDRMLIRYGELSTKGKNRKQFVTRLAQNVKRAMKDLPEVRIHGERDRMYIILNGADYQLAEERLKPIFGIQSFSPAVRVNLDLDEVKAAALSLVQDAHEENGTFKVAARRSHREFPLDSNEINQEIGAHVLQNIEDLTVNVKNPDVKLTIDVRKEGVFLSCRTILGAAGLPVGSSGRAMLMLSGGIDSPVAGYLAQKRGVEIEAVHFHSPPYTSEQAKQKAIDLAGKLAKYSGQVQMHIVPFTEIQEVIKQQIPESVIMTVTRRMMLRITDELRRKRNGLAIVNGESLGQVASQTLESMLAINAVTATPIIRPVVAMDKNEIIQIAQKIDTYNLSVQPFEDCCTIFTPPSPKTKPKLDKIEHYESFTDFDALILKALENVETIAVNVAENAEIKDEFADLF.

Residues 60 to 165 (QLAEERLKPI…KEGVFLSCRT (106 aa)) enclose the THUMP domain. Residues 183–184 (ML), 208–209 (HF), arginine 265, glycine 287, and glutamine 296 contribute to the ATP site.

Belongs to the ThiI family.

The protein resides in the cytoplasm. It carries out the reaction [ThiI sulfur-carrier protein]-S-sulfanyl-L-cysteine + a uridine in tRNA + 2 reduced [2Fe-2S]-[ferredoxin] + ATP + H(+) = [ThiI sulfur-carrier protein]-L-cysteine + a 4-thiouridine in tRNA + 2 oxidized [2Fe-2S]-[ferredoxin] + AMP + diphosphate. The enzyme catalyses [ThiS sulfur-carrier protein]-C-terminal Gly-Gly-AMP + S-sulfanyl-L-cysteinyl-[cysteine desulfurase] + AH2 = [ThiS sulfur-carrier protein]-C-terminal-Gly-aminoethanethioate + L-cysteinyl-[cysteine desulfurase] + A + AMP + 2 H(+). The protein operates within cofactor biosynthesis; thiamine diphosphate biosynthesis. In terms of biological role, catalyzes the ATP-dependent transfer of a sulfur to tRNA to produce 4-thiouridine in position 8 of tRNAs, which functions as a near-UV photosensor. Also catalyzes the transfer of sulfur to the sulfur carrier protein ThiS, forming ThiS-thiocarboxylate. This is a step in the synthesis of thiazole, in the thiamine biosynthesis pathway. The sulfur is donated as persulfide by IscS. The sequence is that of Probable tRNA sulfurtransferase from Listeria innocua serovar 6a (strain ATCC BAA-680 / CLIP 11262).